We begin with the raw amino-acid sequence, 183 residues long: Bifunctional protein PyrR (183 aa).

Positions 98 to 110 (VVLVDDVLYTGRT) match the PRPP-binding motif.

The protein belongs to the purine/pyrimidine phosphoribosyltransferase family. PyrR subfamily.

It catalyses the reaction UMP + diphosphate = 5-phospho-alpha-D-ribose 1-diphosphate + uracil. Regulates the transcription of the pyrimidine nucleotide (pyr) operon in response to exogenous pyrimidines. Its function is as follows. Also displays a weak uracil phosphoribosyltransferase activity which is not physiologically significant. The polypeptide is Bifunctional protein PyrR (Roseiflexus sp. (strain RS-1)).